The primary structure comprises 530 residues: Cytochrome P450 monooxygenase apf7 (530 aa).

A helical transmembrane segment spans residues 6 to 26 (VSPVSIWVFVIYAVTIIIAIY). The N-linked (GlcNAc...) asparagine glycan is linked to Asn-85. Position 464 (Cys-464) interacts with heme.

This sequence belongs to the cytochrome P450 family. Heme is required as a cofactor.

The protein resides in the membrane. The protein operates within secondary metabolite biosynthesis. Functionally, cytochrome P450 monooxygenase; part of the gene cluster that mediates the biosynthesis of the cyclic tetrapeptide apicidin F (APF). The non-ribosomal peptide synthetase apf1 incorporates four different amino acids to produce apicidin F: L-phenylalanine, D-pipecolic acid (D-pip), N-methoxy-L-tryptophan and L-2-aminooctanedioic acid. L-Phenylalanine is the only proteinogenic amino acid directly used by apf1. The 3 other apf1 substrates are non-proteinogenic and have to be modified by other enzymes of the cluster. Lysine is converted to delta-1-pyrroline-5-carboxylate (P5C) which is reduced to L-pipecolic acid (L-pip) by apf3. L-pip is epimerized to D-pip, probably by apf1 activity, prior to incorporation. L-Tryptophan is N-oxidyzed by one of the cytochrome P450 monooxygenases (apf7 or apf8), and further methylated at the hydroxy group by the O-methyltransferase apf6 to yield N-methoxy-L-tryptophan. The synthesis of the fourth apf1 substrate is more complex. The fatty acid synthase apf5 is involved in the synthesis of the octanoic acid backbone of L-2-aminooctanedioic acid by fixing one acetyl-CoA unit and three malonyl-CoA units. Then one of the cytochrome P450 monooxygenases (apf7 or apf8) may oxidize this backbone to 2-oxooctanoic acid. The aminotransferase apf4 is predicted to catalyze the exchange of the keto group with an amino group. The next step would be the oxidation of 2-aminooctanoic acid by one of the cytochrome P450 monooxygenases (apf7 or apf8). The last step is the oxidation of 2-amino-8-hydroxyoctanoic acid to 2-aminooctanedioic acid is catalyzed by the FAD-dependent monooxygenase apf9. In Gibberella fujikuroi (strain CBS 195.34 / IMI 58289 / NRRL A-6831) (Bakanae and foot rot disease fungus), this protein is Cytochrome P450 monooxygenase apf7.